The sequence spans 342 residues: Biotin synthase (342 aa).

In terms of domain architecture, Radical SAM core spans 55 to 274 (NAVQCNQLLN…IALARIMMPK (220 aa)). Residues cysteine 70, cysteine 74, and cysteine 77 each contribute to the [4Fe-4S] cluster site. [2Fe-2S] cluster-binding residues include cysteine 114, cysteine 145, cysteine 205, and arginine 278.

This sequence belongs to the radical SAM superfamily. Biotin synthase family. In terms of assembly, homodimer. It depends on [4Fe-4S] cluster as a cofactor. [2Fe-2S] cluster serves as cofactor.

The catalysed reaction is (4R,5S)-dethiobiotin + (sulfur carrier)-SH + 2 reduced [2Fe-2S]-[ferredoxin] + 2 S-adenosyl-L-methionine = (sulfur carrier)-H + biotin + 2 5'-deoxyadenosine + 2 L-methionine + 2 oxidized [2Fe-2S]-[ferredoxin]. The protein operates within cofactor biosynthesis; biotin biosynthesis; biotin from 7,8-diaminononanoate: step 2/2. Catalyzes the conversion of dethiobiotin (DTB) to biotin by the insertion of a sulfur atom into dethiobiotin via a radical-based mechanism. The protein is Biotin synthase of Rhodopseudomonas palustris (strain BisB5).